The sequence spans 234 residues: LexA repressor (234 aa).

A DNA-binding region (H-T-H motif) is located at residues 26–46; that stretch reads FDEMKEALDLASKSGIHRLIT. Positions 73–107 are disordered; it reads ATAAAPPKGRGAFRPQVFEGGGAPPPAASPAAAAN. Catalysis depends on for autocatalytic cleavage activity residues Ser155 and Lys192.

Belongs to the peptidase S24 family. Homodimer.

The enzyme catalyses Hydrolysis of Ala-|-Gly bond in repressor LexA.. Functionally, represses a number of genes involved in the response to DNA damage (SOS response), including recA and lexA. In the presence of single-stranded DNA, RecA interacts with LexA causing an autocatalytic cleavage which disrupts the DNA-binding part of LexA, leading to derepression of the SOS regulon and eventually DNA repair. This is LexA repressor from Caulobacter vibrioides (strain ATCC 19089 / CIP 103742 / CB 15) (Caulobacter crescentus).